Consider the following 158-residue polypeptide: Ribosomal RNA large subunit methyltransferase H (158 aa).

S-adenosyl-L-methionine is bound by residues Leu-76, Gly-107, and 126–131 (LSGLTM).

The protein belongs to the RNA methyltransferase RlmH family. Homodimer.

It localises to the cytoplasm. It carries out the reaction pseudouridine(1915) in 23S rRNA + S-adenosyl-L-methionine = N(3)-methylpseudouridine(1915) in 23S rRNA + S-adenosyl-L-homocysteine + H(+). Its function is as follows. Specifically methylates the pseudouridine at position 1915 (m3Psi1915) in 23S rRNA. The sequence is that of Ribosomal RNA large subunit methyltransferase H from Teredinibacter turnerae (strain ATCC 39867 / T7901).